A 184-amino-acid chain; its full sequence is Protein GrpE (184 aa).

Positions 1–10 (MSQETEKDLE) are enriched in basic and acidic residues. The interval 1-38 (MSQETEKDLEQTQNEELVEEAQSDEKKDQEVDPVEAAQ) is disordered.

This sequence belongs to the GrpE family. In terms of assembly, homodimer.

It is found in the cytoplasm. Participates actively in the response to hyperosmotic and heat shock by preventing the aggregation of stress-denatured proteins, in association with DnaK and GrpE. It is the nucleotide exchange factor for DnaK and may function as a thermosensor. Unfolded proteins bind initially to DnaJ; upon interaction with the DnaJ-bound protein, DnaK hydrolyzes its bound ATP, resulting in the formation of a stable complex. GrpE releases ADP from DnaK; ATP binding to DnaK triggers the release of the substrate protein, thus completing the reaction cycle. Several rounds of ATP-dependent interactions between DnaJ, DnaK and GrpE are required for fully efficient folding. This chain is Protein GrpE, found in Sulfurovum sp. (strain NBC37-1).